A 313-amino-acid chain; its full sequence is Protoheme IX farnesyltransferase (313 aa).

9 helical membrane passes run 35 to 55 (LVVF…HPVL), 56 to 76 (AATS…LNMW), 98 to 118 (VSSP…VATL), 120 to 140 (VLVN…YAVV), 153 to 173 (IVIG…AATG), 180 to 200 (IILF…LALF), 226 to 246 (ILLY…LGYF), 248 to 268 (AAYG…AFNV), and 292 to 312 (LFLL…AAMI).

It belongs to the UbiA prenyltransferase family. Protoheme IX farnesyltransferase subfamily.

It is found in the cell inner membrane. It catalyses the reaction heme b + (2E,6E)-farnesyl diphosphate + H2O = Fe(II)-heme o + diphosphate. Its pathway is porphyrin-containing compound metabolism; heme O biosynthesis; heme O from protoheme: step 1/1. In terms of biological role, converts heme B (protoheme IX) to heme O by substitution of the vinyl group on carbon 2 of heme B porphyrin ring with a hydroxyethyl farnesyl side group. The chain is Protoheme IX farnesyltransferase from Afipia carboxidovorans (strain ATCC 49405 / DSM 1227 / KCTC 32145 / OM5) (Oligotropha carboxidovorans).